A 381-amino-acid chain; its full sequence is tRNA-cytidine(32) 2-sulfurtransferase (381 aa).

A PP-loop motif motif is present at residues 101–106; it reads SGGKDS. [4Fe-4S] cluster contacts are provided by C176, C179, and C267.

Belongs to the TtcA family. As to quaternary structure, homodimer. The cofactor is Mg(2+). [4Fe-4S] cluster is required as a cofactor.

The protein localises to the cytoplasm. It carries out the reaction cytidine(32) in tRNA + S-sulfanyl-L-cysteinyl-[cysteine desulfurase] + AH2 + ATP = 2-thiocytidine(32) in tRNA + L-cysteinyl-[cysteine desulfurase] + A + AMP + diphosphate + H(+). The protein operates within tRNA modification. Functionally, catalyzes the ATP-dependent 2-thiolation of cytidine in position 32 of tRNA, to form 2-thiocytidine (s(2)C32). The sulfur atoms are provided by the cysteine/cysteine desulfurase (IscS) system. This Psychrobacter arcticus (strain DSM 17307 / VKM B-2377 / 273-4) protein is tRNA-cytidine(32) 2-sulfurtransferase.